The primary structure comprises 132 residues: Small ribosomal subunit protein uS15 (132 aa).

The protein belongs to the universal ribosomal protein uS15 family. Part of the 30S ribosomal subunit.

The sequence is that of Small ribosomal subunit protein uS15 from Methanobrevibacter smithii (strain ATCC 35061 / DSM 861 / OCM 144 / PS).